The primary structure comprises 155 residues: Myosin light chain alkali (155 aa).

EF-hand domains follow at residues 7–41 (REVE…LNLN) and 80–115 (GCYE…LGES).

Myosin is a hexamer of 2 heavy chains and 4 light chains.

The polypeptide is Myosin light chain alkali (Mlc1) (Drosophila simulans (Fruit fly)).